The chain runs to 192 residues: E3 ubiquitin-protein ligase RNF185 (192 aa).

The span at 1-13 (MASKGPSASASTE) shows a compositional bias: polar residues. The segment at 1 to 30 (MASKGPSASASTENSNAGGPSGSSNGTGES) is disordered. Topologically, residues 1-130 (MASKGPSASA…GGFQGFGFGD (130 aa)) are cytoplasmic. Over residues 14-27 (NSNAGGPSGSSNGT) the composition is skewed to low complexity. The interval 29–80 (ESGGQDSTFECNICLDTAKDAVISLCGHLFCWPCLHQWLETRPNRQVCPVCK) is required for ubiquitin ligase activity and protection against ER stress-induced cell death. An RING-type zinc finger spans residues 39–80 (CNICLDTAKDAVISLCGHLFCWPCLHQWLETRPNRQVCPVCK). The segment at 90-123 (PLYGRGSTGQQDPREKTPPRPQGQRPEPENRGGF) is disordered. A helical membrane pass occupies residues 131–151 (GGFQMSFGIGAFPFGIFATAF). The Mitochondrial intermembrane segment spans residues 152–171 (NINDGRPPPAVPGTPQYVDE). The chain crosses the membrane as a helical span at residues 172 to 192 (QFLSRLFLFVALVIMFWLLIA).

In terms of assembly, interacts with ATG5 and BNIP1. Ubiquitously expressed with high expression in testis.

Its subcellular location is the mitochondrion outer membrane. It localises to the endoplasmic reticulum membrane. The catalysed reaction is S-ubiquitinyl-[E2 ubiquitin-conjugating enzyme]-L-cysteine + [acceptor protein]-L-lysine = [E2 ubiquitin-conjugating enzyme]-L-cysteine + N(6)-ubiquitinyl-[acceptor protein]-L-lysine.. It participates in protein modification; protein ubiquitination. Its function is as follows. E3 ubiquitin-protein ligase that regulates selective mitochondrial autophagy by mediating 'Lys-63'-linked polyubiquitination of BNIP1. Acts in the endoplasmic reticulum (ER)-associated degradation (ERAD) pathway, which targets misfolded proteins that accumulate in the endoplasmic reticulum (ER) for ubiquitination and subsequent proteasome-mediated degradation. Protects cells from ER stress-induced apoptosis. Responsible for the cotranslational ubiquitination and degradation of CFTR in the ERAD pathway. Also acts as a regulator of the innate antiviral response by catalyzing 'Lys-27'-linked polyubiquitination of CGAS, thereby promoting CGAS cyclic GMP-AMP synthase activity. Preferentially associates with the E2 enzymes UBE2J1 and UBE2J2. This is E3 ubiquitin-protein ligase RNF185 (Rnf185) from Mus musculus (Mouse).